A 124-amino-acid polypeptide reads, in one-letter code: Small ribosomal subunit protein uS12 (124 aa).

Asp89 is modified (3-methylthioaspartic acid).

It belongs to the universal ribosomal protein uS12 family. As to quaternary structure, part of the 30S ribosomal subunit. Contacts proteins S8 and S17. May interact with IF1 in the 30S initiation complex.

Functionally, with S4 and S5 plays an important role in translational accuracy. Interacts with and stabilizes bases of the 16S rRNA that are involved in tRNA selection in the A site and with the mRNA backbone. Located at the interface of the 30S and 50S subunits, it traverses the body of the 30S subunit contacting proteins on the other side and probably holding the rRNA structure together. The combined cluster of proteins S8, S12 and S17 appears to hold together the shoulder and platform of the 30S subunit. The protein is Small ribosomal subunit protein uS12 of Aliivibrio salmonicida (strain LFI1238) (Vibrio salmonicida (strain LFI1238)).